The chain runs to 155 residues: Mediator of RNA polymerase II transcription subunit 21 (155 aa).

Residues 29 to 73 are disordered; sequence QAPPSVPPGQHRVDTMPEIKGKAASENPQSNPPQPAEPPVPEKIS. Over residues 39 to 51 the composition is skewed to basic and acidic residues; the sequence is HRVDTMPEIKGKA. The span at 58-69 shows a compositional bias: pro residues; the sequence is SNPPQPAEPPVP. Residues 75-147 adopt a coiled-coil conformation; sequence EQFNQDLKEF…EVLLKKVEDK (73 aa).

Belongs to the Mediator complex subunit 21 family. As to quaternary structure, component of the Mediator complex.

It is found in the nucleus. Component of the Mediator complex, a coactivator involved in the regulated transcription of nearly all RNA polymerase II-dependent genes. Mediator functions as a bridge to convey information from gene-specific regulatory proteins to the basal RNA polymerase II transcription machinery. Mediator is recruited to promoters by direct interactions with regulatory proteins and serves as a scaffold for the assembly of a functional preinitiation complex with RNA polymerase II and the general transcription factors. The chain is Mediator of RNA polymerase II transcription subunit 21 (SRB7) from Phaeosphaeria nodorum (strain SN15 / ATCC MYA-4574 / FGSC 10173) (Glume blotch fungus).